Reading from the N-terminus, the 145-residue chain is Large ribosomal subunit protein mL59 (145 aa).

Residues 123–135 show a composition bias toward basic and acidic residues; that stretch reads LKKTSKFKNERQK. The tract at residues 123 to 145 is disordered; it reads LKKTSKFKNERQKASKIAKPSPF.

It belongs to the mitochondrion-specific ribosomal protein mL59 family. Component of the mitochondrial large ribosomal subunit (mt-LSU). Mature yeast 74S mitochondrial ribosomes consist of a small (37S) and a large (54S) subunit. The 37S small subunit contains a 15S ribosomal RNA (15S mt-rRNA) and at least 32 different proteins. The 54S large subunit contains a 21S rRNA (21S mt-rRNA) and at least 45 different proteins.

It is found in the mitochondrion. In terms of biological role, component of the mitochondrial ribosome (mitoribosome), a dedicated translation machinery responsible for the synthesis of mitochondrial genome-encoded proteins, including at least some of the essential transmembrane subunits of the mitochondrial respiratory chain. The mitoribosomes are attached to the mitochondrial inner membrane and translation products are cotranslationally integrated into the membrane. This Schizosaccharomyces pombe (strain 972 / ATCC 24843) (Fission yeast) protein is Large ribosomal subunit protein mL59 (mrpl25).